We begin with the raw amino-acid sequence, 188 residues long: Ribosome-recycling factor (188 aa).

The protein belongs to the RRF family.

The protein resides in the cytoplasm. Its function is as follows. Responsible for the release of ribosomes from messenger RNA at the termination of protein biosynthesis. May increase the efficiency of translation by recycling ribosomes from one round of translation to another. This Phenylobacterium zucineum (strain HLK1) protein is Ribosome-recycling factor.